We begin with the raw amino-acid sequence, 251 residues long: FHA domain-containing protein FHA1 (251 aa).

An FHA domain is found at 32–89 (IILGRNSKKSTVDVDLSSLGGGMNISRNHARIFYDFTRRRFSLEVLGKNGCFVEGVLH). The segment covering 163-174 (EYDDEDDDEEED) has biased composition (acidic residues). The interval 163–209 (EYDDEDDDEEEDIRGSGKKTWRDGHEGVYASGEKKREGRSKADREAD) is disordered. Basic and acidic residues predominate over residues 182-206 (TWRDGHEGVYASGEKKREGRSKADR).

Expressed in roots and vascular tissues near the shoot apex in young seedlings.

The protein resides in the nucleus. May play a role in the control of plant organ development. Does not show transactivation activity in yeast. This chain is FHA domain-containing protein FHA1, found in Arabidopsis thaliana (Mouse-ear cress).